The chain runs to 567 residues: Laccase-3 (567 aa).

The first 24 residues, 1 to 24 (MASSSSSRLLFLLSCSVLALLAGA), serve as a signal peptide directing secretion. 2 Plastocyanin-like domains span residues 32–148 (IVQE…PREN) and 158–310 (REVP…YDCG). N-linked (GlcNAc...) asparagine glycosylation occurs at N78. Residues H82, H84, H127, and H129 each coordinate Cu cation. N148, N187, N203, N298, N330, N379, and N389 each carry an N-linked (GlcNAc...) asparagine glycan. The Plastocyanin-like 3 domain maps to 415–551 (DFPAYPPVQF…AMAFLVEDGY (137 aa)). Residues H468, H471, H473, H530, C531, H532, and H536 each contribute to the Cu cation site.

Belongs to the multicopper oxidase family. The cofactor is Cu cation.

It is found in the secreted. The protein localises to the extracellular space. The protein resides in the apoplast. The enzyme catalyses 4 hydroquinone + O2 = 4 benzosemiquinone + 2 H2O. Functionally, lignin degradation and detoxification of lignin-derived products. In Oryza sativa subsp. japonica (Rice), this protein is Laccase-3 (LAC3).